A 534-amino-acid chain; its full sequence is Probable alanine aminotransferase, mitochondrial (534 aa).

The transit peptide at 1–18 (MFKRSLKVLLSNPPINRV) directs the protein to the mitochondrion. Lysine 352 bears the N6-(pyridoxal phosphate)lysine mark.

The protein belongs to the class-I pyridoxal-phosphate-dependent aminotransferase family. Alanine aminotransferase subfamily. As to quaternary structure, homodimer. Requires pyridoxal 5'-phosphate as cofactor.

The protein localises to the mitochondrion matrix. The catalysed reaction is L-alanine + 2-oxoglutarate = pyruvate + L-glutamate. It participates in amino-acid degradation; L-alanine degradation via transaminase pathway; pyruvate from L-alanine: step 1/1. The protein is Probable alanine aminotransferase, mitochondrial (gpt) of Dictyostelium discoideum (Social amoeba).